The sequence spans 357 residues: Protein pelota homolog (357 aa).

It belongs to the eukaryotic release factor 1 family. Pelota subfamily. In terms of assembly, monomer. It depends on a divalent metal cation as a cofactor.

It is found in the cytoplasm. May function in recognizing stalled ribosomes, interact with stem-loop structures in stalled mRNA molecules, and effect endonucleolytic cleavage of the mRNA. May play a role in the release non-functional ribosomes and degradation of damaged mRNAs. Has endoribonuclease activity. The protein is Protein pelota homolog of Thermococcus gammatolerans (strain DSM 15229 / JCM 11827 / EJ3).